The chain runs to 211 residues: Protein-L-isoaspartate O-methyltransferase (211 aa).

Ser-60 is a catalytic residue.

It belongs to the methyltransferase superfamily. L-isoaspartyl/D-aspartyl protein methyltransferase family.

Its subcellular location is the cytoplasm. It catalyses the reaction [protein]-L-isoaspartate + S-adenosyl-L-methionine = [protein]-L-isoaspartate alpha-methyl ester + S-adenosyl-L-homocysteine. Its function is as follows. Catalyzes the methyl esterification of L-isoaspartyl residues in peptides and proteins that result from spontaneous decomposition of normal L-aspartyl and L-asparaginyl residues. It plays a role in the repair and/or degradation of damaged proteins. This is Protein-L-isoaspartate O-methyltransferase from Pseudomonas fluorescens (strain Pf0-1).